Here is a 204-residue protein sequence, read N- to C-terminus: V-set and transmembrane domain-containing protein 2-like protein (204 aa).

The N-terminal stretch at 1–24 (MGAPLAVALGALHYLALFLQLGGA) is a signal peptide. The Ig-like domain occupies 41 to 158 (ALFTETPHDM…DGKARHHKVK (118 aa)). A disulfide bond links C62 and C142. Positions 168–204 (NSVLHLPEAPPAAPAPPPPKPGKELRKRSVDQEACSL) are disordered. Pro residues predominate over residues 175-187 (EAPPAAPAPPPPK). Positions 188 to 198 (PGKELRKRSVD) are enriched in basic and acidic residues.

The sequence is that of V-set and transmembrane domain-containing protein 2-like protein (VSTM2L) from Homo sapiens (Human).